Consider the following 411-residue polypeptide: Snake venom metalloproteinase VMP1 (411 aa).

The signal sequence occupies residues 1 to 20 (MIQVLLVTICLAAFPYQGSS). A propeptide spanning residues 21 to 189 (IILESGNVND…KKAFQLNLTP (169 aa)) is cleaved from the precursor. Residues 197–393 (RYVELVIIAD…KNPQCILNKP (197 aa)) enclose the Peptidase M12B domain. Ca(2+)-binding residues include Glu200 and Asp284. Cystine bridges form between Cys308–Cys388, Cys348–Cys372, and Cys350–Cys355. N-linked (GlcNAc...) asparagine glycosylation occurs at Asn311. His333 serves as a coordination point for Zn(2+). Glu334 is an active-site residue. 2 residues coordinate Zn(2+): His337 and His343. 6 residues coordinate Ca(2+): Cys388, Asn391, Val403, Asn406, Leu408, and Glu410.

The protein belongs to the venom metalloproteinase (M12B) family. P-I subfamily. In terms of assembly, monomer. The cofactor is Zn(2+). Expressed by the venom gland.

The protein resides in the secreted. With respect to regulation, inhibited by EDTA and 1,10-phenanthroline, but not by PMSF. In terms of biological role, this venom zinc protease has fibrinolytic activity. The recombinant enzyme cleaves both alpha- (FGA) and beta-chains (FGB) of fibrinogen, but not the gamma-chain. The recombinant protein does not produce hemorrhage in mice and does not have effect on ADP- or collagen-stimulated platelet aggregation. The polypeptide is Snake venom metalloproteinase VMP1 (Agkistrodon piscivorus leucostoma (Western cottonmouth)).